The sequence spans 262 residues: Sulfur carrier protein FdhD (262 aa).

Cys-107 serves as the catalytic Cysteine persulfide intermediate.

The protein belongs to the FdhD family.

Its subcellular location is the cytoplasm. Its function is as follows. Required for formate dehydrogenase (FDH) activity. Acts as a sulfur carrier protein that transfers sulfur from IscS to the molybdenum cofactor prior to its insertion into FDH. The polypeptide is Sulfur carrier protein FdhD (Bacillus pumilus (strain SAFR-032)).